The chain runs to 1136 residues: Receptor-type guanylate cyclase gcy-4 (1136 aa).

The N-terminal stretch at 1–21 (MRQLNYYIFISTILTYNLTHG) is a signal peptide. At 22-485 (QGPRPVIRVG…CPLPIFEQYR (464 aa)) the chain is on the extracellular side. N40, N194, N252, N351, N377, N386, and N438 each carry an N-linked (GlcNAc...) asparagine glycan. A helical transmembrane segment spans residues 486–506 (ALVIVAIAVTILILLAIIICM). At 507–1136 (SSKIRNRRVE…LRREMMRVEV (630 aa)) the chain is on the cytoplasmic side. The region spanning 533-833 (LPMHRRASKS…EDNLMDHVFS (301 aa)) is the Protein kinase domain. Positions 536-565 (HRRASKSSQESETESASETENFTSKSGDTM) are disordered. The 131-residue stretch at 891 to 1021 (TVFFSDLVKF…DTVNTASRME (131 aa)) folds into the Guanylate cyclase domain.

The protein belongs to the adenylyl cyclase class-4/guanylyl cyclase family. In terms of tissue distribution, expression is biased toward ASE right (ASER) sensory neuron.

The protein localises to the cell membrane. It carries out the reaction GTP = 3',5'-cyclic GMP + diphosphate. Guanylate cyclase involved in the production of the second messenger cGMP. Regulates chemotaxis responses toward Br(1-) and I(1-) salt ions in ASE right (ASER) sensory neuron. The protein is Receptor-type guanylate cyclase gcy-4 of Caenorhabditis elegans.